The chain runs to 100 residues: MAKKSMIERESKRAALVAKYATRRQALKAAIQKTKSFDERLVLQHQLQDLPVNSVPCRLHNRCTITGRPKGYYRDFGLSRHELRAMAHGCLLPGVTKASW.

The protein belongs to the universal ribosomal protein uS14 family. As to quaternary structure, part of the 30S ribosomal subunit.

It is found in the plastid. The protein resides in the chloroplast. Its function is as follows. Binds 16S rRNA, required for the assembly of 30S particles. The sequence is that of Small ribosomal subunit protein uS14c from Nephroselmis olivacea (Green alga).